Reading from the N-terminus, the 250-residue chain is V-type proton ATPase subunit D (250 aa).

The protein belongs to the V-ATPase D subunit family. In terms of assembly, V-ATPase is a heteromultimeric enzyme made up of two complexes: the ATP-hydrolytic V1 complex and the proton translocation V0 complex. The V1 complex consists of three catalytic AB heterodimers that form a heterohexamer, three peripheral stalks each consisting of EG heterodimers, one central rotor including subunits D and F, and the regulatory subunits C and H. The proton translocation complex V0 consists of the proton transport subunit a, a ring of proteolipid subunits c9c'', rotary subunit d, subunits e and f, and two accessory subunits ATP6AP1/Ac45 and ATP6AP2/PRR.

In terms of biological role, subunit of the V1 complex of vacuolar(H+)-ATPase (V-ATPase), a multisubunit enzyme composed of a peripheral complex (V1) that hydrolyzes ATP and a membrane integral complex (V0) that translocates protons. V-ATPase is responsible for acidifying and maintaining the pH of intracellular compartments and in some cell types, is targeted to the plasma membrane, where it is responsible for acidifying the extracellular environment. The protein is V-type proton ATPase subunit D (VATPD) of Suberites domuncula (Sponge).